We begin with the raw amino-acid sequence, 139 residues long: Large ribosomal subunit protein bL9m (139 aa).

A disordered region spans residues 83–121 (DHQQLSKRHETEVQKNMELRKESVFGHKKEEKPKEEKKG).

It belongs to the bacterial ribosomal protein bL9 family. Component of the mitochondrial large ribosomal subunit (mt-LSU). Mature yeast 74S mitochondrial ribosomes consist of a small (37S) and a large (54S) subunit. The 37S small subunit contains a 15S ribosomal RNA (15S mt-rRNA) and 34 different proteins. The 54S large subunit contains a 21S rRNA (21S mt-rRNA) and 46 different proteins.

It is found in the mitochondrion. In terms of biological role, component of the mitochondrial ribosome (mitoribosome), a dedicated translation machinery responsible for the synthesis of mitochondrial genome-encoded proteins, including at least some of the essential transmembrane subunits of the mitochondrial respiratory chain. The mitoribosomes are attached to the mitochondrial inner membrane and translation products are cotranslationally integrated into the membrane. This Saccharomyces cerevisiae (strain ATCC 204508 / S288c) (Baker's yeast) protein is Large ribosomal subunit protein bL9m (MRPL50).